We begin with the raw amino-acid sequence, 280 residues long: Formamidopyrimidine-DNA glycosylase (280 aa).

The active-site Schiff-base intermediate with DNA is the Pro2. Glu3 functions as the Proton donor in the catalytic mechanism. Catalysis depends on Lys58, which acts as the Proton donor; for beta-elimination activity. The DNA site is built by His91, Arg110, and Arg152. The FPG-type zinc finger occupies 237–271 (NVYGRENLPCPQCDSAIEKVVLNQRAAYFCSNCQK). The active-site Proton donor; for delta-elimination activity is Arg261.

This sequence belongs to the FPG family. Monomer. Zn(2+) is required as a cofactor.

The enzyme catalyses Hydrolysis of DNA containing ring-opened 7-methylguanine residues, releasing 2,6-diamino-4-hydroxy-5-(N-methyl)formamidopyrimidine.. The catalysed reaction is 2'-deoxyribonucleotide-(2'-deoxyribose 5'-phosphate)-2'-deoxyribonucleotide-DNA = a 3'-end 2'-deoxyribonucleotide-(2,3-dehydro-2,3-deoxyribose 5'-phosphate)-DNA + a 5'-end 5'-phospho-2'-deoxyribonucleoside-DNA + H(+). Involved in base excision repair of DNA damaged by oxidation or by mutagenic agents. Acts as a DNA glycosylase that recognizes and removes damaged bases. Has a preference for oxidized purines, such as 7,8-dihydro-8-oxoguanine (8-oxoG). Has AP (apurinic/apyrimidinic) lyase activity and introduces nicks in the DNA strand. Cleaves the DNA backbone by beta-delta elimination to generate a single-strand break at the site of the removed base with both 3'- and 5'-phosphates. This chain is Formamidopyrimidine-DNA glycosylase, found in Hydrogenovibrio crunogenus (strain DSM 25203 / XCL-2) (Thiomicrospira crunogena).